A 563-amino-acid polypeptide reads, in one-letter code: Arginine--tRNA ligase (563 aa).

The short motif at 137–147 (ANPTGLLHMGN) is the 'HIGH' region element.

This sequence belongs to the class-I aminoacyl-tRNA synthetase family. Monomer.

Its subcellular location is the cytoplasm. The enzyme catalyses tRNA(Arg) + L-arginine + ATP = L-arginyl-tRNA(Arg) + AMP + diphosphate. This Desulforudis audaxviator (strain MP104C) protein is Arginine--tRNA ligase.